We begin with the raw amino-acid sequence, 87 residues long: Large ribosomal subunit protein bL27 (87 aa).

The disordered stretch occupies residues 1-23; it reads MAHKKGTGSTRNGRDSNAQRLGV. Polar residues predominate over residues 7–19; the sequence is TGSTRNGRDSNAQ.

Belongs to the bacterial ribosomal protein bL27 family.

The sequence is that of Large ribosomal subunit protein bL27 (rpmA) from Synechocystis sp. (strain ATCC 27184 / PCC 6803 / Kazusa).